We begin with the raw amino-acid sequence, 471 residues long: MTSQLAKKAEAWSARFNEPVSDLVKRYTASVFFDKRLALFDIQGSLAHAAMLAKQGIIAEADRAAIEQGMAQIRQEIEAGTFEWKLDLEDVHLNIEARLTAMAGDAGKRLHTGRSRNDQVATDIRLWLRSEIDNIVGLLKALRGALLDLAEQHTNTIVPGFTHLQVAQPVVFGHHLLAYVEMFTRDTERMLDARRRVNRLPLGAAALAGTSYPIDREFVAQQLGFEGVCRNSLDAVSDRDFAIEFCAAAALIMTHVSRFSEELVLWMSPRVGFIDIADRFCTGSSIMPQKKNPDVPELARGKTGRVNGHLIGLLTLMKGQPLAYNKDNQEDKEPLFDTVDTVVDTLRIFADMVPGITVKADAMRAAALQGYATATDLADYLVKRGLPFRDAHEAVAHAVRACDDLRCDLADLSVAQLRDICGLGDKANLIGDDVHTVLTLEGSVASRNHIGGTAPEQVKQAIAFARAALAE.

The protein belongs to the lyase 1 family. Argininosuccinate lyase subfamily.

The protein localises to the cytoplasm. The enzyme catalyses 2-(N(omega)-L-arginino)succinate = fumarate + L-arginine. It functions in the pathway amino-acid biosynthesis; L-arginine biosynthesis; L-arginine from L-ornithine and carbamoyl phosphate: step 3/3. The polypeptide is Argininosuccinate lyase (Ralstonia pickettii (strain 12J)).